The following is a 617-amino-acid chain: UvrABC system protein C (617 aa).

Residues 22–100 (KLPGVYRFFD…IKALSPKYNI (79 aa)) enclose the GIY-YIG domain. The UVR domain maps to 209–244 (DELTRTLQHKMQTAAANLQFEEAARYRDQIQALGII).

It belongs to the UvrC family. As to quaternary structure, interacts with UvrB in an incision complex.

The protein localises to the cytoplasm. Functionally, the UvrABC repair system catalyzes the recognition and processing of DNA lesions. UvrC both incises the 5' and 3' sides of the lesion. The N-terminal half is responsible for the 3' incision and the C-terminal half is responsible for the 5' incision. The protein is UvrABC system protein C of Neisseria gonorrhoeae (strain ATCC 700825 / FA 1090).